We begin with the raw amino-acid sequence, 520 residues long: Intermediate filament protein ON3 (520 aa).

The span at 1–27 shows a compositional bias: low complexity; it reads MSYTKKTSYSVKSSSSGSVPRSFSSMS. The disordered stretch occupies residues 1–33; sequence MSYTKKTSYSVKSSSSGSVPRSFSSMSYSGPSV. The interval 1–108 is head; that stretch reads MSYTKKTSYS…DPNIQVVRTQ (108 aa). Positions 109–144 are coil 1A; that stretch reads EKEQMKSLNNRFASFIDKVRFLEQQNKMLETKWSLL. The region spanning 109-420 is the IF rod domain; sequence EKEQMKSLNN…KLLEGEEDRL (312 aa). The linker 1 stretch occupies residues 145 to 157; it reads QNQTATRSNIDAM. Residues 158–253 form a coil 1B region; that stretch reads FEAYINNLRR…QIFEEEIREL (96 aa). The linker 12 stretch occupies residues 254-273; that stretch reads QSQIKDTSVVVEMDNSRNLD. Positions 274 to 420 are coil 2; it reads MDAIVAEVRA…KLLEGEEDRL (147 aa). A tail region spans residues 421–520; that stretch reads LSGIKSVNIS…VSESSEVVQD (100 aa).

It belongs to the intermediate filament family.

Functionally, one of the non-neuronal predominant intermediate filament proteins of the visual pathway. This Carassius auratus (Goldfish) protein is Intermediate filament protein ON3.